The following is a 503-amino-acid chain: Arabinose import ATP-binding protein AraG 1 (503 aa).

ABC transporter domains follow at residues 5-240 (LRFD…MVGR) and 251-497 (RALG…LPQT). Residue 37 to 44 (GENGAGKS) coordinates ATP.

The protein belongs to the ABC transporter superfamily. Arabinose importer (TC 3.A.1.2.2) family. In terms of assembly, the complex is composed of two ATP-binding proteins (AraG), two transmembrane proteins (AraH) and a solute-binding protein (AraF).

The protein resides in the cell inner membrane. The catalysed reaction is L-arabinose(out) + ATP + H2O = L-arabinose(in) + ADP + phosphate + H(+). Its function is as follows. Part of the ABC transporter complex AraFGH involved in arabinose import. Responsible for energy coupling to the transport system. This Burkholderia lata (strain ATCC 17760 / DSM 23089 / LMG 22485 / NCIMB 9086 / R18194 / 383) protein is Arabinose import ATP-binding protein AraG 1.